Here is a 171-residue protein sequence, read N- to C-terminus: 16S rRNA aminocarboxypropyltransferase (171 aa).

Positions 18, 68, 91, and 110 each coordinate S-adenosyl-L-methionine.

Belongs to the TDD superfamily. TSR3 family.

It is found in the cytoplasm. The catalysed reaction is an N(1)-methylpseudouridine in rRNA + S-adenosyl-L-methionine = N(1)-methyl-N(3)-[(3S)-3-amino-3-carboxypropyl]pseudouridine in rRNA + S-methyl-5'-thioadenosine + H(+). Aminocarboxypropyltransferase that catalyzes the aminocarboxypropyl transfer on pseudouridine corresponding to position 914 in M.jannaschii 16S rRNA. It constitutes the last step in biosynthesis of the hypermodified N1-methyl-N3-(3-amino-3-carboxypropyl) pseudouridine (m1acp3-Psi). This Methanosphaera stadtmanae (strain ATCC 43021 / DSM 3091 / JCM 11832 / MCB-3) protein is 16S rRNA aminocarboxypropyltransferase.